A 334-amino-acid polypeptide reads, in one-letter code: MHTGTTLTQFIIEEQRHIAGASGDFTALLNDIVTAIKTISNAVNKGALIGVMGALDTENVQGETQKKLDVITNEIMIRNNEWAGHLSGMASEEMDDVYSIPSPYPLGKYLLVFDPLDGSSNVDLNISVGTIFSILRSPVPSRAASMEDFLQPGVKQVCAGYALYGSSTMLVLTTGHGVNGFTLDRDIGEFVLTHPNMRIPADTREFAINASNQRFWEAPVQRYVAECLAGSTGPRGRDFNMRWVASMVAEVHRILTRGGIFMYPRDTKDPSKPGRLRLMYEANPMSFIVEQAGGLSTTGYERILDVVPQDLHQRVPVILGSKNEVEVVLEYHNA.

Mg(2+) is bound by residues glutamate 92, aspartate 114, leucine 116, and aspartate 117. Substrate-binding positions include 117–120 and asparagine 209; that span reads DGSS. Glutamate 281 contributes to the Mg(2+) binding site.

Belongs to the FBPase class 1 family. In terms of assembly, homotetramer. It depends on Mg(2+) as a cofactor.

It is found in the cytoplasm. The catalysed reaction is beta-D-fructose 1,6-bisphosphate + H2O = beta-D-fructose 6-phosphate + phosphate. It functions in the pathway carbohydrate biosynthesis; gluconeogenesis. The chain is Fructose-1,6-bisphosphatase class 1 from Nitrosomonas europaea (strain ATCC 19718 / CIP 103999 / KCTC 2705 / NBRC 14298).